The chain runs to 1017 residues: Peroxisomal ATPase PEX6 (1017 aa).

758 to 765 (GPPGTGKT) provides a ligand contact to ATP.

This sequence belongs to the AAA ATPase family. As to quaternary structure, interacts with PEX1; forming the PEX1-PEX6 AAA ATPase complex, which is composed of a heterohexamer formed by a trimer of PEX1-PEX6 dimers.

The protein localises to the cytoplasm. Its subcellular location is the cytosol. The protein resides in the peroxisome membrane. It catalyses the reaction ATP + H2O = ADP + phosphate + H(+). Functionally, component of the PEX1-PEX6 AAA ATPase complex, a protein dislocase complex that mediates the ATP-dependent extraction of the PEX5 receptor from peroxisomal membranes, an essential step for PEX5 recycling. Specifically recognizes PEX5 monoubiquitinated at 'Cys-6', and pulls it out of the peroxisome lumen through the PEX2-PEX10-PEX12 retrotranslocation channel. Extraction by the PEX1-PEX6 AAA ATPase complex is accompanied by unfolding of the TPR repeats and release of bound cargo from PEX5. This is Peroxisomal ATPase PEX6 (PEX6) from Candida glabrata (strain ATCC 2001 / BCRC 20586 / JCM 3761 / NBRC 0622 / NRRL Y-65 / CBS 138) (Yeast).